Reading from the N-terminus, the 190-residue chain is Putative triphosphatase YjbK (190 aa).

One can recognise a CYTH domain in the interval E4–S189.

The polypeptide is Putative triphosphatase YjbK (yjbK) (Bacillus subtilis (strain 168)).